The sequence spans 244 residues: Tetraspanin-2A (244 aa).

The Cytoplasmic segment spans residues 1-22; sequence MGIGYGASDEQLEKQIGCVKYT. Residues 23–43 traverse the membrane as a helical segment; it reads LFCFNIVAWMISTALFALTVW. Residues 44 to 61 lie on the Extracellular side of the membrane; the sequence is LRAEPGFNDWLRILEAQS. A helical transmembrane segment spans residues 62–82; sequence FYIGVYVLIGISIVMMAVSFL. The Cytoplasmic segment spans residues 83-91; it reads GCLSALMEN. A helical membrane pass occupies residues 92-112; sequence TLALFVFVGTQVFGFIAIVAG. At 113-206 the chain is on the extracellular side; the sequence is SAVLLQFSTI…TWFFEGKTGW (94 aa). Residues 207-227 traverse the membrane as a helical segment; that stretch reads IVALAMTLGLLNVICAVMSFV. Over 228–244 the chain is Cytoplasmic; that stretch reads LVQAVKKEEEQASNYRR.

This sequence belongs to the tetraspanin (TM4SF) family. In terms of assembly, forms a complex with Ssk and mesh.

The protein localises to the apicolateral cell membrane. Its subcellular location is the cell junction. The protein resides in the septate junction. In terms of biological role, required for assembly of smooth septate junctions (sSJs), together with Ssk and mesh. Important for barrier function of the midgut epithelium. The polypeptide is Tetraspanin-2A (Drosophila melanogaster (Fruit fly)).